A 109-amino-acid polypeptide reads, in one-letter code: T cell receptor alpha variable 26-2 (109 aa).

The N-terminal stretch at Met1–Ala19 is a signal peptide. The Ig-like domain occupies Lys20–Asp109. The cysteines at positions 39 and 105 are disulfide-linked. Asn40 carries an N-linked (GlcNAc...) asparagine glycan.

In terms of assembly, alpha-beta TR is a heterodimer composed of an alpha and beta chain; disulfide-linked. The alpha-beta TR is associated with the transmembrane signaling CD3 coreceptor proteins to form the TR-CD3 (TcR or TCR). The assembly of alpha-beta TR heterodimers with CD3 occurs in the endoplasmic reticulum where a single alpha-beta TR heterodimer associates with one CD3D-CD3E heterodimer, one CD3G-CD3E heterodimer and one CD247 homodimer forming a stable octameric structure. CD3D-CD3E and CD3G-CD3E heterodimers preferentially associate with TR alpha and TR beta chains, respectively. The association of the CD247 homodimer is the last step of TcR assembly in the endoplasmic reticulum and is required for transport to the cell surface.

It is found in the cell membrane. In terms of biological role, v region of the variable domain of T cell receptor (TR) alpha chain that participates in the antigen recognition. Alpha-beta T cell receptors are antigen specific receptors which are essential to the immune response and are present on the cell surface of T lymphocytes. Recognize peptide-major histocompatibility (MH) (pMH) complexes that are displayed by antigen presenting cells (APC), a prerequisite for efficient T cell adaptive immunity against pathogens. Binding of alpha-beta TR to pMH complex initiates TR-CD3 clustering on the cell surface and intracellular activation of LCK that phosphorylates the ITAM motifs of CD3G, CD3D, CD3E and CD247 enabling the recruitment of ZAP70. In turn ZAP70 phosphorylates LAT, which recruits numerous signaling molecules to form the LAT signalosome. The LAT signalosome propagates signal branching to three major signaling pathways, the calcium, the mitogen-activated protein kinase (MAPK) kinase and the nuclear factor NF-kappa-B (NF-kB) pathways, leading to the mobilization of transcription factors that are critical for gene expression and essential for T cell growth and differentiation. The T cell repertoire is generated in the thymus, by V-(D)-J rearrangement. This repertoire is then shaped by intrathymic selection events to generate a peripheral T cell pool of self-MH restricted, non-autoaggressive T cells. Post-thymic interaction of alpha-beta TR with the pMH complexes shapes TR structural and functional avidity. The protein is T cell receptor alpha variable 26-2 of Homo sapiens (Human).